The following is an 81-amino-acid chain: Photosystem I iron-sulfur center (81 aa).

2 consecutive 4Fe-4S ferredoxin-type domains span residues 2–31 (SHSV…MVAW) and 39–68 (IASA…VRVY). [4Fe-4S] cluster is bound by residues Cys-11, Cys-14, Cys-17, Cys-21, Cys-48, Cys-51, Cys-54, and Cys-58.

In terms of assembly, the eukaryotic PSI reaction center is composed of at least 11 subunits. It depends on [4Fe-4S] cluster as a cofactor.

The protein resides in the plastid. Its subcellular location is the chloroplast thylakoid membrane. It catalyses the reaction reduced [plastocyanin] + hnu + oxidized [2Fe-2S]-[ferredoxin] = oxidized [plastocyanin] + reduced [2Fe-2S]-[ferredoxin]. Its function is as follows. Apoprotein for the two 4Fe-4S centers FA and FB of photosystem I (PSI); essential for photochemical activity. FB is the terminal electron acceptor of PSI, donating electrons to ferredoxin. The C-terminus interacts with PsaA/B/D and helps assemble the protein into the PSI complex. Required for binding of PsaD and PsaE to PSI. PSI is a plastocyanin/cytochrome c6-ferredoxin oxidoreductase, converting photonic excitation into a charge separation, which transfers an electron from the donor P700 chlorophyll pair to the spectroscopically characterized acceptors A0, A1, FX, FA and FB in turn. In Guillardia theta (Cryptophyte), this protein is Photosystem I iron-sulfur center.